The chain runs to 737 residues: Cilium assembly protein DZIP1L (737 aa).

The interval 1–293 (MGFKGKYPQM…LKQSNEQFIQ (293 aa)) is interaction with Rab8. A coiled-coil region spans residues 98 to 132 (VTDLKEAHTTAQEEIATLRKSLSESNNEVVQLHKR). The C2H2-type zinc finger occupies 144-167 (YPCHLCTKNFISNEALNVHIGRKH). Disordered stretches follow at residues 167–187 (HRVA…DRDK), 214–267 (ERNI…KEQL), 415–548 (SEFL…RKDA), 624–682 (KSPL…VSRD), and 698–737 (IRGA…DNLK). Basic and acidic residues-rich tracts occupy residues 244–266 (EPKE…RKEQ) and 415–438 (SEFL…KGSE). Polar residues predominate over residues 457–469 (SAGSSDSNPTYTK). Residues 492-510 (SQEETENEEERSLTEEEGT) are compositionally biased toward acidic residues. Over residues 665-677 (SSEQQTRSPSPQR) the composition is skewed to polar residues. Over residues 724–737 (EDGKSFNDSDDNLK) the composition is skewed to basic and acidic residues.

It belongs to the DZIP C2H2-type zinc-finger protein family. As to quaternary structure, component of a ciliary transition zone (TZ)-localized complex composed of DZIP1, Fam92 and Cby. Interacts directly with Cby. Interacts with Cep290 (via N-terminus). Interacts (via N-terminus) with Rab8. In terms of tissue distribution, in neurons of the second and third antennal segments, expressed at the tip of the dendrites.

The protein localises to the cytoplasm. The protein resides in the cytoskeleton. Its subcellular location is the microtubule organizing center. It is found in the centrosome. It localises to the centriole. The protein localises to the cilium basal body. In terms of biological role, component of the DZIP1-Fam92-Cby complex which promotes ciliogenesis in sensory neurons and spermatocytes by acting downstream of Cep290 to initiate early ciliary membrane formation and thus transition zone (TZ) assembly. During spermatogenesis, also regulates distal elongation of the basal-body and their docking (anchoring) to the plasma membrane and as a consequence, regulates the initiation and proper elongation of axonemal microtubules. Within the complex, required to recruit or stabilize Rab8, Fam92 and Cby at the distal basal body of cilia to promote early ciliary membrane formation and initiate TZ assembly. Also acts with Fam92 to restrict Cep290 localization to the proximal part of the TZ. May also be involved in recruitment or stabilization of Mks1 at the TZ. This Drosophila melanogaster (Fruit fly) protein is Cilium assembly protein DZIP1L.